Reading from the N-terminus, the 128-residue chain is uncharacterized protein (128 aa).

Belongs to the HesB/IscA family.

This is an uncharacterized protein from Buchnera aphidicola subsp. Baizongia pistaciae (strain Bp).